Here is a 451-residue protein sequence, read N- to C-terminus: Prenyltransferase asqH1 (451 aa).

Positions alanine 14–proline 37 are disordered. Residue glutamate 120 coordinates L-tryptophan. The substrate site is built by arginine 137, arginine 274, lysine 276, tyrosine 278, and tyrosine 373.

The protein belongs to the tryptophan dimethylallyltransferase family.

The catalysed reaction is quinolinone B + dimethylallyl diphosphate = peniprequinolone + diphosphate. Its pathway is secondary metabolite biosynthesis. The protein operates within alkaloid biosynthesis. It participates in mycotoxin biosynthesis. In terms of biological role, prenyltransferase; part of the gene cluster that mediates the biosynthesis of the aspoquinolone mycotoxins. Within the pathway, the prenyltransferase asqH1 catalyzes the canonical Friedel-Crafts alkylation of quinolinone B with dimethylallyl cation to yield dimethylallyl quinolone. The first step of the pathway is catalyzed by the nonribosomal peptide synthetase asqK that condenses anthranilic acid and O-methyl-L-tyrosine to produce 4'-methoxycyclopeptin. 4'-methoxycyclopeptin is then converted to 4'-methoxydehydrocyclopeptin by the ketoglutarate-dependent dioxygenase asqJ. AsqJ also converts its first product 4'-methoxydehydrocyclopeptin to 4'-methoxycyclopenin. The following conversion of 4'-methoxycyclopenin into 4'-methoxyviridicatin is catalyzed by the cyclopenase asqI. 4'-methoxyviridicatin is the precursor of quinolone natural products, and is further converted to quinolinone B. The prenyltransferase asqH1 then catalyzes the canonical Friedel-Crafts alkylation of quinolinone B with dimethylallyl cation to yield dimethylallyl quinolone, which is subjected to FAD-dependent dehydrogenation by the FAD-linked oxidoreductase asqF to yield conjugated aryl diene. The delta(3') double bond then serves as the site of the second alkylation with DMAPP catalyzed by the prenyltransferase asqH2 to yield a carbenium ion intermediate, which can be attacked by H(2)O to yield a styrenyl quinolone containing a C3'-hydroxyprenyl chain. The FAD-dependent monooxygenase asqG performs epoxidation of the terminal C7'-C8' olefin. Finally, after dehydratation of the epoxide at C3 by asqC, the quinolone epoxide rearrangement protein asqO catalyzes an enzymatic 3-exo-tet cyclization to yield the cyclopropyl-THF ring system in aspoquinolone. The chain is Prenyltransferase asqH1 from Emericella nidulans (strain FGSC A4 / ATCC 38163 / CBS 112.46 / NRRL 194 / M139) (Aspergillus nidulans).